Reading from the N-terminus, the 194-residue chain is Large ribosomal subunit protein eL15 (194 aa).

Residues 165 to 194 form a disordered region; it reads AGKKGRGLMNKGKGAEKVRPGIRANKKLGK.

Belongs to the eukaryotic ribosomal protein eL15 family.

The polypeptide is Large ribosomal subunit protein eL15 (Methanococcus aeolicus (strain ATCC BAA-1280 / DSM 17508 / OCM 812 / Nankai-3)).